Consider the following 255-residue polypeptide: Ribonuclease HII (255 aa).

The RNase H type-2 domain maps to 72–255; that stretch reads NYIAGVDEAG…RLSFVKNFVE (184 aa). Positions 78, 79, and 170 each coordinate a divalent metal cation.

Belongs to the RNase HII family. Mn(2+) serves as cofactor. It depends on Mg(2+) as a cofactor.

It localises to the cytoplasm. It carries out the reaction Endonucleolytic cleavage to 5'-phosphomonoester.. In terms of biological role, endonuclease that specifically degrades the RNA of RNA-DNA hybrids. The protein is Ribonuclease HII of Ruminiclostridium cellulolyticum (strain ATCC 35319 / DSM 5812 / JCM 6584 / H10) (Clostridium cellulolyticum).